The primary structure comprises 569 residues: MARPKNVKHIFVTGGVISSLGKGILSASLGMLLKSRGLRVAIQKYDPYINVDPGTMSPYQHGEVYVTDDGAETDLDLGHYERFLDESTSQTSNLTMGRVYKSVIDKERNGDYLGATVQVVPHVIDEIKERMAEQAKNSNLDILITEIGGTIGDIESLPFLEAMRELKLDMGDGNLINIHLTYVPYIKAASELKTKPTQHSVKMLLGVGIQPDILVCRSEKQLSRDIKNKVGHFCNLNDLDVIGLSDCATIYEVPLMLLQEELDSRVLKKLGIKGYQEPALTYWRDFCNKVKFPQEGEITIGICGKYTEYPDAYKSILEAFVHAGASNNVRVNVKLLRAESAEEPTFDFAKELAGIHAILVAPGFGDRGIEGKIRYIQYAREQNIPFFGICLGMQCATIEFARNVCDLQDANSTEFNKRARFAIIDLMEHQKKVKEKGGTMRLGSYPCIITDGSKAHMAYQKFLVNERHRHRYEFNNSFRTLFEERGMLFSGTSPNGELIEIVEIKNHRWFVGVQFHPELKSRVQKVHPLFHSFVAAAKDYARGVQQMDMAIEMPSFMPILNEEGESKSE.

Residues 1-272 form an amidoligase domain region; that stretch reads MARPKNVKHI…DSRVLKKLGI (272 aa). Ser-18 contacts CTP. Ser-18 provides a ligand contact to UTP. Position 19-24 (19-24) interacts with ATP; the sequence is SLGKGI. Tyr-59 lines the L-glutamine pocket. Asp-76 contacts ATP. Mg(2+) is bound by residues Asp-76 and Glu-146. Residues 153–155, 193–198, and Lys-229 contribute to the CTP site; these read DIE and KTKPTQ. UTP is bound by residues 193 to 198 and Lys-229; that span reads KTKPTQ. One can recognise a Glutamine amidotransferase type-1 domain in the interval 299–543; it reads TIGICGKYTE…VAAAKDYARG (245 aa). L-glutamine is bound at residue Gly-363. Catalysis depends on Cys-390, which acts as the Nucleophile; for glutamine hydrolysis. L-glutamine-binding positions include 391-394, Glu-414, and Arg-471; that span reads LGMQ. Active-site residues include His-516 and Glu-518.

It belongs to the CTP synthase family. As to quaternary structure, homotetramer.

The enzyme catalyses UTP + L-glutamine + ATP + H2O = CTP + L-glutamate + ADP + phosphate + 2 H(+). The catalysed reaction is L-glutamine + H2O = L-glutamate + NH4(+). It carries out the reaction UTP + NH4(+) + ATP = CTP + ADP + phosphate + 2 H(+). It functions in the pathway pyrimidine metabolism; CTP biosynthesis via de novo pathway; CTP from UDP: step 2/2. With respect to regulation, allosterically activated by GTP, when glutamine is the substrate; GTP has no effect on the reaction when ammonia is the substrate. The allosteric effector GTP functions by stabilizing the protein conformation that binds the tetrahedral intermediate(s) formed during glutamine hydrolysis. Inhibited by the product CTP, via allosteric rather than competitive inhibition. Functionally, catalyzes the ATP-dependent amination of UTP to CTP with either L-glutamine or ammonia as the source of nitrogen. Regulates intracellular CTP levels through interactions with the four ribonucleotide triphosphates. This Chlorobium chlorochromatii (strain CaD3) protein is CTP synthase.